The following is a 173-amino-acid chain: Small ribosomal subunit protein uS13 (173 aa).

The span at 130–143 (GVRHKRGQKVRGQR) shows a compositional bias: basic residues. Residues 130–155 (GVRHKRGQKVRGQRTKSTGRTEGTIG) form a disordered region.

This sequence belongs to the universal ribosomal protein uS13 family. In terms of assembly, part of the 30S ribosomal subunit. Forms a loose heterodimer with protein S19. Forms two bridges to the 50S subunit in the 70S ribosome.

Functionally, located at the top of the head of the 30S subunit, it contacts several helices of the 16S rRNA. In the 70S ribosome it contacts the 23S rRNA (bridge B1a) and protein L5 of the 50S subunit (bridge B1b), connecting the 2 subunits; these bridges are implicated in subunit movement. The protein is Small ribosomal subunit protein uS13 of Haloquadratum walsbyi (strain DSM 16790 / HBSQ001).